The following is a 536-amino-acid chain: Adenine deaminase (536 aa).

The interval 1–24 (MTPSPHDLLHCGMNSQDRDETNGD) is disordered.

It belongs to the metallo-dependent hydrolases superfamily. Adenine deaminase family. Requires Mn(2+) as cofactor.

It carries out the reaction adenine + H2O + H(+) = hypoxanthine + NH4(+). In Deinococcus radiodurans (strain ATCC 13939 / DSM 20539 / JCM 16871 / CCUG 27074 / LMG 4051 / NBRC 15346 / NCIMB 9279 / VKM B-1422 / R1), this protein is Adenine deaminase.